A 379-amino-acid chain; its full sequence is Glutamate 5-kinase (379 aa).

Lys19 provides a ligand contact to ATP. 3 residues coordinate substrate: Ser59, Asp146, and Asn158. ATP is bound by residues 178–179 (TD) and 220–226 (TGGMATK). Positions 285–363 (SGDIIIDDGA…KDIISILGHD (79 aa)) constitute a PUA domain.

The protein belongs to the glutamate 5-kinase family.

It localises to the cytoplasm. The catalysed reaction is L-glutamate + ATP = L-glutamyl 5-phosphate + ADP. Its pathway is amino-acid biosynthesis; L-proline biosynthesis; L-glutamate 5-semialdehyde from L-glutamate: step 1/2. Catalyzes the transfer of a phosphate group to glutamate to form L-glutamate 5-phosphate. The chain is Glutamate 5-kinase from Vibrio campbellii (strain ATCC BAA-1116).